The chain runs to 21 residues: Alpha-fibrinogenase A1 (21 aa).

The protein belongs to the peptidase S1 family. Snake venom subfamily. Monomer. As to expression, expressed by the venom gland.

The protein resides in the secreted. Its activity is regulated as follows. Inhibited by PMSF, bovine aprotinin (APR), and soybean trypsin inhibitor (STI). Is not inhibited by EDTA, beta-mercaptoethanol, and high temperature (85 degrees Celsius). In terms of biological role, snake venom serine protease that completely cleaves fibrinogen Aalpha chain (FGA), partially cleaves Bbeta chain (FGB) and has no activity on gamma chain. Is more potent that A2 and A3 alpha-fibrinogenases. Very active within 5 minutes. The chain is Alpha-fibrinogenase A1 from Crotalus atrox (Western diamondback rattlesnake).